A 589-amino-acid chain; its full sequence is Proline--tRNA ligase (589 aa).

Belongs to the class-II aminoacyl-tRNA synthetase family. ProS type 1 subfamily. As to quaternary structure, homodimer.

It is found in the cytoplasm. The enzyme catalyses tRNA(Pro) + L-proline + ATP = L-prolyl-tRNA(Pro) + AMP + diphosphate. Catalyzes the attachment of proline to tRNA(Pro) in a two-step reaction: proline is first activated by ATP to form Pro-AMP and then transferred to the acceptor end of tRNA(Pro). As ProRS can inadvertently accommodate and process non-cognate amino acids such as alanine and cysteine, to avoid such errors it has two additional distinct editing activities against alanine. One activity is designated as 'pretransfer' editing and involves the tRNA(Pro)-independent hydrolysis of activated Ala-AMP. The other activity is designated 'posttransfer' editing and involves deacylation of mischarged Ala-tRNA(Pro). The misacylated Cys-tRNA(Pro) is not edited by ProRS. The protein is Proline--tRNA ligase of Corynebacterium aurimucosum (strain ATCC 700975 / DSM 44827 / CIP 107346 / CN-1) (Corynebacterium nigricans).